A 334-amino-acid polypeptide reads, in one-letter code: uncharacterized protein (334 aa).

The next 2 helical transmembrane spans lie at 19-39 and 55-75; these read AFLR…SFGI and LIVL…AALF. The tract at residues 308-334 is disordered; sequence KPESKSSSQKSVETEIEKEVKDKLAKN. The span at 319-334 shows a compositional bias: basic and acidic residues; that stretch reads VETEIEKEVKDKLAKN.

It localises to the cell membrane. This is an uncharacterized protein from Mycoplasma genitalium (strain ATCC 33530 / DSM 19775 / NCTC 10195 / G37) (Mycoplasmoides genitalium).